The chain runs to 359 residues: Alpha-ketoglutarate-dependent dioxygenase cnsM (359 aa).

Histidine 120 is a substrate binding site. 2 residues coordinate Fe cation: histidine 158 and aspartate 160. A 2-oxoglutarate-binding site is contributed by threonine 186. Position 311 (histidine 311) interacts with Fe cation. 2 residues coordinate 2-oxoglutarate: arginine 323 and arginine 327. Arginine 327 contributes to the substrate binding site.

The protein belongs to the TfdA dioxygenase family. Requires Fe(2+) as cofactor.

Its pathway is alkaloid biosynthesis. Its function is as follows. Alpha-ketoglutarate-dependent dioxygenase; part of the gene cluster that mediates the biosynthesis of communesins, a prominent class of indole alkaloids with great potential as pharmaceuticals. Communesins are biosynthesized by the coupling of tryptamine and aurantioclavine, two building blocks derived from L-tryptophan. The L-tryptophan decarboxylase cnsB converts L-tryptophan to tryptamine, whereas the tryptophan dimethylallyltransferase cnsF converts L-tryptophan to 4-dimethylallyl tryptophan which is further transformed to aurantioclavine by the aurantioclavine synthase cnsA, probably aided by the catalase cnsD. The cytochrome P450 monooxygenase cnsC catalyzes the heterodimeric coupling between the two different indole moieties, tryptamine and aurantioclavine, to construct vicinal quaternary stereocenters and yield the heptacyclic communesin scaffold. The O-methyltransferase cnsE then methylates the communesin scaffold to produce communesin K, the simplest characterized communesin that contains the heptacyclic core. The dioxygenase cnsJ converts communesin K into communesin I. Acylation to introduce the hexadienyl group at position N16 of communesin I by the acyltransferase cnsK leads to the production of communesin B. The hexadienyl group is produced by the highly reducing polyketide synthase cnsI, before being hydrolytically removed from cnsI by the serine hydrolase cnsH, converted into hexadienyl-CoA by the CoA ligase cnsG, and then transferred to communesin I by cnsK. Surprisingly, cnsK may also be a promiscuous acyltransferase that can tolerate a range of acyl groups, including acetyl-, propionyl-, and butyryl-CoA, which lead to communesins A, G and H respectively. The roles of the alpha-ketoglutarate-dependent dioxygenases cnsM and cnsP have still to be determined. This Penicillium expansum (Blue mold rot fungus) protein is Alpha-ketoglutarate-dependent dioxygenase cnsM.